The following is a 415-amino-acid chain: Serine--tRNA ligase (415 aa).

231–233 (TAE) is an L-serine binding site. ATP is bound at residue 262–264 (RSE). An L-serine-binding site is contributed by Glu-285. An ATP-binding site is contributed by 349–352 (EISS). Ser-383 lines the L-serine pocket.

The protein belongs to the class-II aminoacyl-tRNA synthetase family. Type-1 seryl-tRNA synthetase subfamily. In terms of assembly, homodimer. The tRNA molecule binds across the dimer.

The protein localises to the cytoplasm. It catalyses the reaction tRNA(Ser) + L-serine + ATP = L-seryl-tRNA(Ser) + AMP + diphosphate + H(+). The catalysed reaction is tRNA(Sec) + L-serine + ATP = L-seryl-tRNA(Sec) + AMP + diphosphate + H(+). It functions in the pathway aminoacyl-tRNA biosynthesis; selenocysteinyl-tRNA(Sec) biosynthesis; L-seryl-tRNA(Sec) from L-serine and tRNA(Sec): step 1/1. Its function is as follows. Catalyzes the attachment of serine to tRNA(Ser). Is also able to aminoacylate tRNA(Sec) with serine, to form the misacylated tRNA L-seryl-tRNA(Sec), which will be further converted into selenocysteinyl-tRNA(Sec). This Helicobacter pylori (strain J99 / ATCC 700824) (Campylobacter pylori J99) protein is Serine--tRNA ligase.